A 524-amino-acid polypeptide reads, in one-letter code: Rho guanine nucleotide exchange factor 3 (524 aa).

2 positions are modified to phosphoserine: serine 46 and serine 69. The DH domain occupies 121-303 (KRQEAIFELS…QGIVAEINTK (183 aa)). Positions 290–448 (INIIQGIVAE…WLNCIRQAKE (159 aa)) constitute a PH domain. Residues 461 to 524 (DSEGLVQGPG…CANSRPEESV (64 aa)) form a disordered region. Positions 472-484 (ENREPQGETKLEQ) are enriched in basic and acidic residues.

As to quaternary structure, interacts with RHOA and RHOB.

It localises to the cytoplasm. Functionally, acts as a guanine nucleotide exchange factor (GEF) for RhoA and RhoB GTPases. This Mus musculus (Mouse) protein is Rho guanine nucleotide exchange factor 3 (Arhgef3).